Consider the following 520-residue polypeptide: Probable glycerol-3-phosphate acyltransferase 3 (520 aa).

The next 5 membrane-spanning stretches (helical) occupy residues 5–20 (ISIF…RFIL), 64–84 (YFML…LFIL), 88–108 (ISLM…FFGI), 264–284 (TLMN…AAAA), and 286–306 (LFVS…FSGC). The HXXXXD motif signature appears at 334-339 (HRTLLD).

Belongs to the GPAT/DAPAT family. In terms of tissue distribution, widely expressed at low level. Expressed at higher level in seedlings and leaves.

The protein localises to the membrane. The enzyme catalyses sn-glycerol 3-phosphate + an acyl-CoA = a 1-acyl-sn-glycero-3-phosphate + CoA. The protein operates within phospholipid metabolism; CDP-diacylglycerol biosynthesis; CDP-diacylglycerol from sn-glycerol 3-phosphate: step 1/3. Its function is as follows. Esterifies acyl-group from acyl-ACP to the sn-1 position of glycerol-3-phosphate, an essential step in glycerolipid biosynthesis. The polypeptide is Probable glycerol-3-phosphate acyltransferase 3 (GPAT3) (Arabidopsis thaliana (Mouse-ear cress)).